A 322-amino-acid chain; its full sequence is MFEIHPVKKVSVVIPVYNEQESLPELIRRTTTACESLGKEYEILLIDDGSSDNSAHMLVEASQAENSHIVSILLNRNYGQHSAIMAGFSHVTGDLIITLDADLQNPPEEIPRLVAKADEGYDVVGTVRQNRQDSWFRKTASKMINRLIQRTTGKAMGNYGCMLRAYRRHIVDAMLHCHERSTFIPILANIFARRAIEIPVHHAEREFGESKYSFMRLINLMYDLVTCLTTTPLRMLSLLGSIIAIGGFSIAVLLVILRLTFGPQWAAEGVFMLFAVLFTFIGAQFIGMGLLGEYIGRIYTDVRARPRYFVQQVIRPSSKENE.

At 1–235 (MFEIHPVKKV…TCLTTTPLRM (235 aa)) the chain is on the cytoplasmic side. The chain crosses the membrane as a helical span at residues 236-256 (LSLLGSIIAIGGFSIAVLLVI). At 257 to 269 (LRLTFGPQWAAEG) the chain is on the periplasmic side. A helical membrane pass occupies residues 270-290 (VFMLFAVLFTFIGAQFIGMGL). The Cytoplasmic portion of the chain corresponds to 291 to 322 (LGEYIGRIYTDVRARPRYFVQQVIRPSSKENE).

The protein belongs to the glycosyltransferase 2 family.

It is found in the cell inner membrane. It catalyses the reaction UDP-4-deoxy-4-formamido-beta-L-arabinose + di-trans,octa-cis-undecaprenyl phosphate = 4-deoxy-4-formamido-alpha-L-arabinopyranosyl di-trans,octa-cis-undecaprenyl phosphate + UDP. The protein operates within glycolipid biosynthesis; 4-amino-4-deoxy-alpha-L-arabinose undecaprenyl phosphate biosynthesis; 4-amino-4-deoxy-alpha-L-arabinose undecaprenyl phosphate from UDP-4-deoxy-4-formamido-beta-L-arabinose and undecaprenyl phosphate: step 1/2. Its pathway is bacterial outer membrane biogenesis; lipopolysaccharide biosynthesis. Its function is as follows. Catalyzes the transfer of 4-deoxy-4-formamido-L-arabinose from UDP to undecaprenyl phosphate. The modified arabinose is attached to lipid A and is required for resistance to polymyxin and cationic antimicrobial peptides. The polypeptide is Undecaprenyl-phosphate 4-deoxy-4-formamido-L-arabinose transferase (Shigella flexneri serotype 5b (strain 8401)).